The sequence spans 247 residues: PF03932 family protein CutC (247 aa).

The protein belongs to the CutC family.

The protein localises to the cytoplasm. This Klebsiella pneumoniae (strain 342) protein is PF03932 family protein CutC.